The following is an 81-amino-acid chain: MAHSVKIYDTCIGCTQCVRACPTDVLEMVPWNGCRAKQIASAPRTEDCVGCKRCESACPTDYLSVRVYLRNEVTRSMGLAY.

2 consecutive 4Fe-4S ferredoxin-type domains span residues 2–31 (AHSV…MVPW) and 39–68 (IASA…VRVY). 8 residues coordinate [4Fe-4S] cluster: Cys-11, Cys-14, Cys-17, Cys-21, Cys-48, Cys-51, Cys-54, and Cys-58.

As to quaternary structure, the eukaryotic PSI reaction center is composed of at least 11 subunits. The cofactor is [4Fe-4S] cluster.

The protein resides in the plastid. It is found in the chloroplast thylakoid membrane. The catalysed reaction is reduced [plastocyanin] + hnu + oxidized [2Fe-2S]-[ferredoxin] = oxidized [plastocyanin] + reduced [2Fe-2S]-[ferredoxin]. Its function is as follows. Apoprotein for the two 4Fe-4S centers FA and FB of photosystem I (PSI); essential for photochemical activity. FB is the terminal electron acceptor of PSI, donating electrons to ferredoxin. The C-terminus interacts with PsaA/B/D and helps assemble the protein into the PSI complex. Required for binding of PsaD and PsaE to PSI. PSI is a plastocyanin-ferredoxin oxidoreductase, converting photonic excitation into a charge separation, which transfers an electron from the donor P700 chlorophyll pair to the spectroscopically characterized acceptors A0, A1, FX, FA and FB in turn. This Gnetum gnemon (Spanish joint-fir) protein is Photosystem I iron-sulfur center.